Consider the following 346-residue polypeptide: 3-dehydroquinate synthase (346 aa).

NAD(+)-binding positions include 61-66, 95-99, 119-120, Lys-132, and Lys-141; these read DGEAYK, GVIGD, and TT. Glu-174, His-233, and His-250 together coordinate Zn(2+).

The protein belongs to the sugar phosphate cyclases superfamily. Dehydroquinate synthase family. NAD(+) is required as a cofactor. Co(2+) serves as cofactor. Requires Zn(2+) as cofactor.

It is found in the cytoplasm. It catalyses the reaction 7-phospho-2-dehydro-3-deoxy-D-arabino-heptonate = 3-dehydroquinate + phosphate. Its pathway is metabolic intermediate biosynthesis; chorismate biosynthesis; chorismate from D-erythrose 4-phosphate and phosphoenolpyruvate: step 2/7. Catalyzes the conversion of 3-deoxy-D-arabino-heptulosonate 7-phosphate (DAHP) to dehydroquinate (DHQ). The chain is 3-dehydroquinate synthase from Wolinella succinogenes (strain ATCC 29543 / DSM 1740 / CCUG 13145 / JCM 31913 / LMG 7466 / NCTC 11488 / FDC 602W) (Vibrio succinogenes).